We begin with the raw amino-acid sequence, 599 residues long: MRVSRLMLVTLRDVPADAEIASHQLLLRGGYIRRVTSGIYAYLPLMWRVLRKITAIVQEEMDATGALETLLPQLQPAELWRRSGRWQGYTAGEGLMFHLEDRQGRELGLGPTHEEVITSLAGDLLRSYRQLPVTLYQIQSKFRDEIRPRFGLMRGREFIMKDAYSFHACEADLAMTYTAMDEAYQRIFSRCGLETVAVEADSGAIGGASSQEFMVTADAGEDLILISGDGLYAANQEKAVSHPPKAIPLLASKAALLDTPEQGTIETLCTAQGLVPSQVVKVLVMLARIEDGELQPVLVSIRGDQQLNEVKLINALSRELNKGVLDVAPISADQISAQKLEAWPFGAMGPDLDDALLSEATSWTKHFLRLADPTATELNCFVCGANQNNQHRIGMTWSKLGEVPKSVDLRKSQAGDRCIHDSSQILEERRGIEVGHIFQLGRKYSEALEACFTNDKGTQEPFWMGCYGIGISRLAQAAVEQHHDEAGMNWPLAIAPFEVIIVVANIQDEVQQKLAEQLYSELQAADIEVLLDDRNERAGVKFKDADLIGIPWRIVVGRDAAKGQVELIQRSSRKVEILSATQAFTALVQEIAANQNTRV.

The protein belongs to the class-II aminoacyl-tRNA synthetase family. ProS type 1 subfamily. Homodimer.

It localises to the cytoplasm. The catalysed reaction is tRNA(Pro) + L-proline + ATP = L-prolyl-tRNA(Pro) + AMP + diphosphate. Its function is as follows. Catalyzes the attachment of proline to tRNA(Pro) in a two-step reaction: proline is first activated by ATP to form Pro-AMP and then transferred to the acceptor end of tRNA(Pro). As ProRS can inadvertently accommodate and process non-cognate amino acids such as alanine and cysteine, to avoid such errors it has two additional distinct editing activities against alanine. One activity is designated as 'pretransfer' editing and involves the tRNA(Pro)-independent hydrolysis of activated Ala-AMP. The other activity is designated 'posttransfer' editing and involves deacylation of mischarged Ala-tRNA(Pro). The misacylated Cys-tRNA(Pro) is not edited by ProRS. The polypeptide is Proline--tRNA ligase (Prochlorococcus marinus (strain MIT 9303)).